Here is a 973-residue protein sequence, read N- to C-terminus: Nuclear factor NF-kappa-B p105 subunit (973 aa).

One can recognise an RHD domain in the interval A38 to N245. C60 bears the S-nitrosocysteine; alternate mark. The S-(15-deoxy-Delta12,14-prostaglandin J2-9-yl)cysteine; alternate moiety is linked to residue C60. Residue K324 forms a Glycyl lysine isopeptide (Lys-Gly) (interchain with G-Cter in SUMO2) linkage. Position 336 is a phosphoserine (S336). Residues Q359 to K364 carry the Nuclear localization signal motif. The tract at residues D371–G394 is GRR. The tract at residues T434–P467 is disordered. The interval I435–I973 is interaction with CFLAR. The span at F439–Q463 shows a compositional bias: basic and acidic residues. Residue K440 is modified to N6-acetyllysine. Residue S449 is modified to Phosphoserine. ANK repeat units lie at residues N540 to D570, L579 to L608, W612 to L641, E648 to A677, S682 to D711, and D716 to V745. Residues E648 to S682 are essential for interaction with HIF1AN. N676 is subject to (3S)-3-hydroxyasparagine; by HIF1AN. At S757 the chain carries Phosphoserine. An ANK 7 repeat occupies P769–D799. Positions Q803–F890 constitute a Death domain. S898 is subject to Phosphoserine. S912 is modified (phosphoserine; by GSK3-beta; in vitro). S928 is modified (phosphoserine). A phosphoserine; by IKKB mark is found at S932 and S937. Position 942 is a phosphoserine (S942). T948 carries the phosphothreonine modification.

In terms of assembly, component of the NF-kappa-B p65-p50 complex. Homodimer; component of the NF-kappa-B p50-p50 complex. Component of the NF-kappa-B p105-p50 complex. Component of the NF-kappa-B p50-c-Rel complex. Component of a complex consisting of the NF-kappa-B p50-p50 homodimer and BCL3. Also interacts with MAP3K8. NF-kappa-B p50 subunit interacts with NCOA3 coactivator, which may coactivate NF-kappa-B dependent expression via its histone acetyltransferase activity. Interacts with TSC22D3; this interaction prevents nuclear translocation and DNA-binding. Interacts with SPAG9 and UNC5CL. NFKB1/p105 interacts with CFLAR; the interaction inhibits p105 processing into p50. NFKB1/p105 forms a ternary complex with MAP3K8 and TNIP2. Interacts with GSK3B; the interaction prevents processing of p105 to p50. NFKB1/p50 interacts with NFKBIE. NFKB1/p50 interacts with NFKBIZ. Nuclear factor NF-kappa-B p50 subunit interacts with NFKBID. Directly interacts with MEN1. Interacts with HIF1AN. Interacts with FEM1A; interaction is direct. Generation of the NF-kappa-B p50 (Nuclear factor NF-kappa-B p50 subunit) transcription factor takes place both cotranslationally and post-translationally via non-mutually exclusive mechanisms. A cotranslational processing allows the production of both p50 and p105 (Nuclear factor NF-kappa-B p105 subunit) from a single NFKB1 mRNA. While translation occurs, the particular unfolded structure after the GRR repeat region acts as a substrate for the proteasome, promoting degradation of the C-terminus. The GRR acts as a proteasomal 'stop signal', protecting the region upstream of the GRR from degradation and promoting generation of p50. It is unclear if limited proteasome degradation during cotranslational processing depends on ubiquitination. NF-kappa-B p50 is also generated post-translationally following ubiquitination by the KPC complex, leading to limited processing by the proteasome downstream of the GRR region, thereby generating p50. Post-translationally, phosphorylation at the C-terminus by IKBKB/IKKB acts as a signal for ubiquitination and promotes either complete degradation or processing to generate the NF-kappa-B p50 (Nuclear factor NF-kappa-B p50 subunit). Phosphorylation at Ser-912 primes p105 for proteolytic processing in response to TNF-alpha stimulation. Phosphorylation at Ser-928, Ser-932 and Ser-937 are required for BTRC/BTRCP-mediated ubiquitination and proteolysis. Phosphorylation at Ser-932 is also required for ubiquitination by the KPC complex and limited processing to generate NF-kappa-B p50 (Nuclear factor NF-kappa-B p50 subunit). In terms of processing, polyubiquitinated at multiple Lys residues in the C-terminus. Polyubiquitinated by the SCF(FBXW11) and SCF(BTRC) complexes following phosphorylation at Ser-928, Ser-932 and Ser-937, leading to its complete degradation. In contrast, polyubiquitination by the KPC complex following phosphorylation at Ser-932 leads to limited proteosomal processing and generation of the active NF-kappa-B p50 (Nuclear factor NF-kappa-B p50 subunit). S-nitrosylation of Cys-60 affects DNA binding. Post-translationally, the covalent modification of cysteine by 15-deoxy-Delta12,14-prostaglandin-J2 is autocatalytic and reversible. It may occur as an alternative to other cysteine modifications, such as S-nitrosylation and S-palmitoylation.

Its subcellular location is the cytoplasm. It localises to the nucleus. Its function is as follows. NF-kappa-B is a pleiotropic transcription factor present in almost all cell types and is the endpoint of a series of signal transduction events that are initiated by a vast array of stimuli related to many biological processes such as inflammation, immunity, differentiation, cell growth, tumorigenesis and apoptosis. NF-kappa-B is a homo- or heterodimeric complex formed by the Rel-like domain-containing proteins RELA/p65, RELB, NFKB1/p105, NFKB1/p50, REL and NFKB2/p52 and the heterodimeric p65-p50 complex appears to be most abundant one. The dimers bind at kappa-B sites in the DNA of their target genes and the individual dimers have distinct preferences for different kappa-B sites that they can bind with distinguishable affinity and specificity. Different dimer combinations act as transcriptional activators or repressors, respectively. NF-kappa-B is controlled by various mechanisms of post-translational modification and subcellular compartmentalization as well as by interactions with other cofactors or corepressors. NF-kappa-B complexes are held in the cytoplasm in an inactive state complexed with members of the NF-kappa-B inhibitor (I-kappa-B) family. In a conventional activation pathway, I-kappa-B is phosphorylated by I-kappa-B kinases (IKKs) in response to different activators, subsequently degraded thus liberating the active NF-kappa-B complex which translocates to the nucleus. NF-kappa-B heterodimeric p65-p50 and RelB-p50 complexes are transcriptional activators. The NF-kappa-B p50-p50 homodimer is a transcriptional repressor, but can act as a transcriptional activator when associated with BCL3. NFKB1 appears to have dual functions such as cytoplasmic retention of attached NF-kappa-B proteins by p105 and generation of p50 by a cotranslational processing. The proteasome-mediated process ensures the production of both p50 and p105 and preserves their independent function, although processing of NFKB1/p105 also appears to occur post-translationally. p50 binds to the kappa-B consensus sequence 5'-GGRNNYYCC-3', located in the enhancer region of genes involved in immune response and acute phase reactions. In a complex with MAP3K8, NFKB1/p105 represses MAP3K8-induced MAPK signaling; active MAP3K8 is released by proteasome-dependent degradation of NFKB1/p105. Functionally, P105 is the precursor of the active p50 subunit (Nuclear factor NF-kappa-B p50 subunit) of the nuclear factor NF-kappa-B. Acts as a cytoplasmic retention of attached NF-kappa-B proteins by p105. Constitutes the active form, which associates with RELA/p65 to form the NF-kappa-B p65-p50 complex to form a transcription factor. Together with RELA/p65, binds to the kappa-B consensus sequence 5'-GGRNNYYCC-3', located in the enhancer region of genes involved in immune response and acute phase reactions. The polypeptide is Nuclear factor NF-kappa-B p105 subunit (Nfkb1) (Rattus norvegicus (Rat)).